The chain runs to 202 residues: Small ribosomal subunit protein uS4c (202 aa).

Residues 18–45 form a disordered region; sequence LPGLTRKMAKRKSPPGQHGAASKKPSQY. The region spanning 90 to 152 is the S4 RNA-binding domain; the sequence is MRLDTTIFRL…SRSRKLIEGY (63 aa).

This sequence belongs to the universal ribosomal protein uS4 family. Part of the 30S ribosomal subunit. Contacts protein S5. The interaction surface between S4 and S5 is involved in control of translational fidelity.

The protein resides in the plastid. The protein localises to the chloroplast. Functionally, one of the primary rRNA binding proteins, it binds directly to 16S rRNA where it nucleates assembly of the body of the 30S subunit. With S5 and S12 plays an important role in translational accuracy. The chain is Small ribosomal subunit protein uS4c (rps4) from Nephroselmis olivacea (Green alga).